The chain runs to 2799 residues: Peramine synthetase ppzA (2799 aa).

An adenylation 1 region spans residues 270–666 (QERCRLQPNA…VGRKDTQVKI (397 aa)). Residues 799-875 (QPLTGMERLL…DLSRQSRYIE (77 aa)) enclose the Carrier 1 domain. S836 is modified (O-(pantetheine 4'-phosphoryl)serine). The segment at 914 to 1327 (DAYPCTPLQE…ITILTTEDLE (414 aa)) is condensation. Positions 1350 to 1743 (DKVQARPNAP…TLSFVRRKDT (394 aa)) are adenylation 2. The segment at 1874-1970 (LEIGCGSGMM…EYLVKLIQDI (97 aa)) is methylation (Met) domain. One can recognise a Carrier 2 domain in the interval 2290–2368 (SPTTDMEKEL…RLLLDCCCDD (79 aa)). S2327 bears the O-(pantetheine 4'-phosphoryl)serine mark. The tract at residues 2420 to 2737 (TVLLTGANGF…LADMLQDLED (318 aa)) is thiesterase (TE) domain.

This sequence belongs to the NRP synthetase family. Requires pantetheine 4'-phosphate as cofactor.

It catalyses the reaction (S)-1-pyrroline-5-carboxylate + L-arginine + S-adenosyl-L-methionine + 2 ATP = peramine + 2 AMP + S-adenosyl-L-homocysteine + 2 diphosphate + H2O + 2 H(+). It functions in the pathway secondary metabolite biosynthesis. Functionally, nonribosomal peptide synthetase; part of the gene cluster that mediates the biosynthesis of pyrrolopyrazines, secondary metabolites showing insecticidal activity. The single multifunctional NRPS ppzA is responsible for the biosynthesis of peramine. The condensation domain of ppzA is proposed to catalyze formation of a peptide bond between 1-pyrroline-5-carboxylate and arginine. The methylation domain of ppzA would catalyze the N-methylation of the alpha-amino group of arginine. The reductase domain is proposed to be responsible for reduction of the thioester and the cyclization to form an iminium ion resulting in release from the peptide synthetase. Deprotonation of this intermediate and oxidation of the pyrroline ring would give rise to peramine. This final oxidation to give the pyrrole functionality may be spontaneous. In Epichloe species that produce only peramine, the peramine synthetase gene is not localized in a gene cluster, in contrast to Metarhizium species that contain additional pyrrolopyrazine biosynthesis genes. The 2-oxoglutarate-Fe(II) type oxidoreductase ppzC hydroxylates peramine to yield the newly identified compound 8-hydroxyperamine whereas ppzD converts L-proline into trans-4-hydroxy-L-proline, a precursor of peramine biosynthesis. The protein is Peramine synthetase ppzA of Metarhizium majus (strain ARSEF 297).